We begin with the raw amino-acid sequence, 334 residues long: Probable peptidoglycan endopeptidase LytE (334 aa).

Residues Met1–Ala25 form the signal peptide. LysM domains lie at Gln26–Ile69, Ser86–Leu129, and Ser149–Val192. Disordered stretches follow at residues Asn70–Lys89, Gly131–Val153, and Thr195–Ser215. Low complexity-rich tracts occupy residues Lys72–Thr87 and Ser132–Val153. In terms of domain architecture, NlpC/P60 spans Ser217 to Phe334. Residue Cys247 is the Nucleophile of the active site. The active-site Proton acceptor is the His296. Residue His308 is part of the active site.

The protein belongs to the peptidase C40 family.

Its subcellular location is the secreted. The protein resides in the cell wall. In terms of biological role, cell wall hydrolase that cleaves gamma-D-glutamate-meso-diaminopimelate bonds in peptidoglycan. Seems to play a role in cell separation during vegetative growth. This chain is Probable peptidoglycan endopeptidase LytE (lytE), found in Bacillus subtilis (strain 168).